Consider the following 47-residue polypeptide: ATP-dependent zinc metalloprotease FTSH, chloroplastic (47 aa).

In the N-terminal section; belongs to the AAA ATPase family. This sequence in the C-terminal section; belongs to the peptidase M41 family. It depends on Zn(2+) as a cofactor.

It is found in the plastid. Its subcellular location is the chloroplast membrane. In terms of biological role, seems to act as an ATP-dependent zinc metallopeptidase. In Populus euphratica (Euphrates poplar), this protein is ATP-dependent zinc metalloprotease FTSH, chloroplastic.